The chain runs to 441 residues: DILAAFRVTPQPGVPPEEAGAAVAPESSTGTWTTVWTDGLTSLDRYKGRCYHIEPVAGEENQYIAYVAYPLDLFEEGSVTNMFTSIVGNVFGFKALRALRLEDLRIPPAYSKTFQGPPHGIQVERDKLNKYGRPLLGCTIKPKLGLSAKNYGRAVYECLRGGLDFTKDDENVNSQPFMRWRDRFLFCAEAIYKAQAETGEIKGHYLNATAGTCEEMIKRAVFARELGVPIVMHDYLTGGFTANTSLAHYCRDNGLLLHIHRAMHAVIDRQKNRGMHFRVLAKALRMSGGDHIHAGTVVGKLEGERDITLGFVDLLRDDFLEKDRSRGIYFTQDWVSLPGVLPVASGGIHVWHMPALTEIFGDDSVLQFGGGTLGHPWGNAPGAVANRVALEACVQARNEGRDLAREGNEIIREASKWSPELAAACEVWKEIKFEFEAMDTL.

N89 and T139 together coordinate substrate. K141 acts as the Proton acceptor in catalysis. K143 provides a ligand contact to substrate. 3 residues coordinate Mg(2+): K167, D169, and E170. K167 is subject to N6-carboxylysine. H260 serves as the catalytic Proton acceptor. 3 residues coordinate substrate: R261, H293, and S345.

The protein belongs to the RuBisCO large chain family. Type I subfamily. In terms of assembly, heterohexadecamer of 8 large chains and 8 small chains; disulfide-linked. The disulfide link is formed within the large subunit homodimers. Mg(2+) is required as a cofactor. The disulfide bond which can form in the large chain dimeric partners within the hexadecamer appears to be associated with oxidative stress and protein turnover.

The protein localises to the plastid. It is found in the chloroplast. It catalyses the reaction 2 (2R)-3-phosphoglycerate + 2 H(+) = D-ribulose 1,5-bisphosphate + CO2 + H2O. It carries out the reaction D-ribulose 1,5-bisphosphate + O2 = 2-phosphoglycolate + (2R)-3-phosphoglycerate + 2 H(+). RuBisCO catalyzes two reactions: the carboxylation of D-ribulose 1,5-bisphosphate, the primary event in carbon dioxide fixation, as well as the oxidative fragmentation of the pentose substrate in the photorespiration process. Both reactions occur simultaneously and in competition at the same active site. This is Ribulose bisphosphate carboxylase large chain from Fouquieria splendens (Ocotillo).